Here is a 175-residue protein sequence, read N- to C-terminus: Large ribosomal subunit protein bL17m (175 aa).

Residues 1 to 8 (MRLSVAAA) constitute a mitochondrion transit peptide. The interval 155-175 (DLRQSQEASNHSSHTAQTPGI) is disordered. Positions 161–175 (EASNHSSHTAQTPGI) are enriched in polar residues.

This sequence belongs to the bacterial ribosomal protein bL17 family. Component of the mitochondrial large ribosomal subunit (mt-LSU). Mature mammalian 55S mitochondrial ribosomes consist of a small (28S) and a large (39S) subunit. The 28S small subunit contains a 12S ribosomal RNA (12S mt-rRNA) and 30 different proteins. The 39S large subunit contains a 16S rRNA (16S mt-rRNA), a copy of mitochondrial valine transfer RNA (mt-tRNA(Val)), which plays an integral structural role, and 52 different proteins. As to expression, detected in adrenal gland, mammary gland and adipose tissue.

Its subcellular location is the mitochondrion. The protein is Large ribosomal subunit protein bL17m (MRPL17) of Homo sapiens (Human).